A 482-amino-acid polypeptide reads, in one-letter code: uncharacterized protein (482 aa).

Low complexity-rich tracts occupy residues 24–86 (SPNS…AQQQ) and 312–339 (TDSL…SQSI). Disordered regions lie at residues 24 to 88 (SPNS…QQHY) and 307 to 376 (LHSQ…LIGK). Over residues 342-363 (EEEEDGGEDEEEEGGEDNDNES) the composition is skewed to acidic residues.

This is an uncharacterized protein from Dictyostelium discoideum (Social amoeba).